Consider the following 242-residue polypeptide: Dickkopf-like protein 1 (242 aa).

Residues 1-30 (MGEASPPAPARRHLLVLLLLLSTLVIPSAA) form the signal peptide. Asn97 and Asn112 each carry an N-linked (GlcNAc...) asparagine glycan.

As to quaternary structure, interacts with SLXL1; Co-localize in seminiferous tubules. Interacts with SLY. In terms of processing, N-glycosylated during spermatogenesis. Not N-glycosylated in mature sperm. In terms of tissue distribution, more highly expressed in adult testis than in fetal testis. Exclusively expressed in the testis (at protein level). Intense expression in stages II, III and IV of spermatogenesis, whereas expression is lower in stage I.

The protein localises to the secreted. It is found in the cytoplasmic vesicle. The protein resides in the secretory vesicle. It localises to the acrosome. In terms of biological role, involved in fertilization by facilitating sperm penetration of the zona pellucida. May promote spermatocyte apoptosis, thereby limiting sperm production. In adults, may reduce testosterone synthesis in Leydig cells. Is not essential either for development or fertility. The protein is Dickkopf-like protein 1 of Homo sapiens (Human).